A 361-amino-acid chain; its full sequence is Beta-hexosaminidase (361 aa).

Substrate contacts are provided by residues aspartate 69, arginine 77, arginine 144, and 174-175 (KH). Histidine 187 acts as the Proton donor/acceptor in catalysis. The active-site Nucleophile is the aspartate 258.

It belongs to the glycosyl hydrolase 3 family. NagZ subfamily.

It localises to the cytoplasm. The catalysed reaction is Hydrolysis of terminal non-reducing N-acetyl-D-hexosamine residues in N-acetyl-beta-D-hexosaminides.. Its pathway is cell wall biogenesis; peptidoglycan recycling. Functionally, plays a role in peptidoglycan recycling by cleaving the terminal beta-1,4-linked N-acetylglucosamine (GlcNAc) from peptide-linked peptidoglycan fragments, giving rise to free GlcNAc, anhydro-N-acetylmuramic acid and anhydro-N-acetylmuramic acid-linked peptides. In Neisseria gonorrhoeae (strain ATCC 700825 / FA 1090), this protein is Beta-hexosaminidase.